A 350-amino-acid polypeptide reads, in one-letter code: Small ribosomal subunit biogenesis GTPase RsgA (350 aa).

The span at 1–17 (MSKNKLSKGQQRRVNAN) shows a compositional bias: polar residues. Residues 1–27 (MSKNKLSKGQQRRVNANHQRRLKTSAE) form a disordered region. Residues 104-273 (TSVLTRPDFY…VIDSPGVREF (170 aa)) enclose the CP-type G domain. Residues 160–163 (NKID) and 214–222 (GQSGVGKSS) each bind GTP. Zn(2+) is bound by residues Cys297, Cys302, His304, and Cys310.

Belongs to the TRAFAC class YlqF/YawG GTPase family. RsgA subfamily. Monomer. Associates with 30S ribosomal subunit, binds 16S rRNA. Zn(2+) serves as cofactor.

It localises to the cytoplasm. In terms of biological role, one of several proteins that assist in the late maturation steps of the functional core of the 30S ribosomal subunit. Helps release RbfA from mature subunits. May play a role in the assembly of ribosomal proteins into the subunit. Circularly permuted GTPase that catalyzes slow GTP hydrolysis, GTPase activity is stimulated by the 30S ribosomal subunit. In Salmonella agona (strain SL483), this protein is Small ribosomal subunit biogenesis GTPase RsgA.